The sequence spans 506 residues: Maturase K (506 aa).

Belongs to the intron maturase 2 family. MatK subfamily.

Its subcellular location is the plastid. It is found in the chloroplast. In terms of biological role, usually encoded in the trnK tRNA gene intron. Probably assists in splicing its own and other chloroplast group II introns. The polypeptide is Maturase K (Mentzelia lindleyi (Blazing star)).